We begin with the raw amino-acid sequence, 367 residues long: Glutamate 5-kinase (367 aa).

ATP is bound at residue Lys9. Residues Ser49, Asp136, and Asn148 each coordinate substrate. ATP-binding positions include 168–169 (TD) and 210–216 (TGGMKSK). The 75-residue stretch at 276-350 (SGQIEIDAGA…GMQSQHIQAR (75 aa)) folds into the PUA domain.

It belongs to the glutamate 5-kinase family.

It localises to the cytoplasm. It catalyses the reaction L-glutamate + ATP = L-glutamyl 5-phosphate + ADP. It functions in the pathway amino-acid biosynthesis; L-proline biosynthesis; L-glutamate 5-semialdehyde from L-glutamate: step 1/2. In terms of biological role, catalyzes the transfer of a phosphate group to glutamate to form L-glutamate 5-phosphate. The polypeptide is Glutamate 5-kinase (Bacillus cereus (strain ZK / E33L)).